We begin with the raw amino-acid sequence, 830 residues long: DNA gyrase subunit A (830 aa).

Residues 33–497 (LPDVRDGLKP…AENDIDIEDL (465 aa)) enclose the Topo IIA-type catalytic domain. The O-(5'-phospho-DNA)-tyrosine intermediate role is filled by Tyr121. The GyrA-box signature appears at 524–530 (QKRGGRG). The interval 805 to 830 (KDDSEQLEDSEEVSEVHDAEENNSEE) is disordered.

It belongs to the type II topoisomerase GyrA/ParC subunit family. As to quaternary structure, heterotetramer, composed of two GyrA and two GyrB chains. In the heterotetramer, GyrA contains the active site tyrosine that forms a transient covalent intermediate with DNA, while GyrB binds cofactors and catalyzes ATP hydrolysis.

It is found in the cytoplasm. The catalysed reaction is ATP-dependent breakage, passage and rejoining of double-stranded DNA.. In terms of biological role, a type II topoisomerase that negatively supercoils closed circular double-stranded (ds) DNA in an ATP-dependent manner to modulate DNA topology and maintain chromosomes in an underwound state. Negative supercoiling favors strand separation, and DNA replication, transcription, recombination and repair, all of which involve strand separation. Also able to catalyze the interconversion of other topological isomers of dsDNA rings, including catenanes and knotted rings. Type II topoisomerases break and join 2 DNA strands simultaneously in an ATP-dependent manner. The polypeptide is DNA gyrase subunit A (Clostridium acetobutylicum (strain ATCC 824 / DSM 792 / JCM 1419 / IAM 19013 / LMG 5710 / NBRC 13948 / NRRL B-527 / VKM B-1787 / 2291 / W)).